The following is an 82-amino-acid chain: Turripeptide Lol6.1 (82 aa).

An N-terminal signal peptide occupies residues 1–23 (MRFHWIPTLTVLLVLSMSFGTEA). Positions 24-48 (IPXXXXXXXXXXXXXXXXXXXXXXX) are excised as a propeptide. 3 cysteine pairs are disulfide-bonded: C54–C66, C58–C71, and C65–C77.

Expressed by the venom duct.

The protein localises to the secreted. Acts as a neurotoxin by inhibiting an ion channel. This is Turripeptide Lol6.1 from Iotyrris olangoensis (Sea snail).